The primary structure comprises 351 residues: Nuclear inhibitor of protein phosphatase 1 (351 aa).

Positions 1–142 (MAAAANSGSS…LPSAVKGDEK (142 aa)) are interaction with CDC5L, SF3B1 and MELK. Positions 49-101 (YLFGRNPDLCDFTIDHQSCSRVHAALVYHKHLKRVFLIDLNSTHGTFLGHIRL) constitute an FHA domain. The tract at residues 143–224 (MGGEDDELKG…VDPSVGRFRN (82 aa)) is interaction with EED. T161 carries the phosphothreonine modification. A phosphoserine mark is found at S178 and S199. Short sequence motifs (nuclear localization signal) lie at residues 185–209 (GNLD…DDEI) and 210–240 (INPE…RVEG). The involved in PP-1 inhibition stretch occupies residues 191–200 (RPKRKRKNSR). The involved in PP-1 binding stretch occupies residues 200–203 (RVTF). A Phosphoserine modification is found at S204. S249 is modified (phosphoserine). Phosphotyrosine; by LYN; in vitro is present on Y264. Residues 310–329 (AVNMNPAPNPAVYNPEAVNE) are interaction with EED. Residues 316-351 (APNPAVYNPEAVNEPKKKKYAKEAWPGKKPTPSLLI) form a disordered region. Residues 330–351 (PKKKKYAKEAWPGKKPTPSLLI) are RNA-binding. Positions 331 to 337 (KKKKYAK) are involved in PP-1 inhibition. The residue at position 335 (Y335) is a Phosphotyrosine.

In terms of assembly, interacts with phosphorylated CDC5L, SF3B1 and MELK. Interacts with EED, in a nucleic acid-stimulated manner. Part of a complex consisting of PPP1R8, EED, HDAC2 and PP-1. Part of the spliceosome. Interacts with PPP1CA, PPP1CB and PPP1CC. The cofactor is Mg(2+). Post-translationally, may be inactivated by phosphorylation on Ser-199 or Ser-204. Phosphorylated by Lyn in vitro on Tyr-264, and also on Tyr-335 in the presence of RNA. In terms of tissue distribution, ubiquitously expressed, with highest levels in heart and skeletal muscle, followed by brain, placenta, lung, liver and pancreas. Less abundant in kidney. The concentration and ratio between isoforms is cell-type dependent. Isoform Alpha (&gt;90%) and isoform Beta were found in brain, heart and kidney. Isoform Gamma is mainly found in B-cells and T-lymphocytes, and has been found in 293 embryonic kidney cells.

The protein localises to the nucleus. The protein resides in the nucleus speckle. It localises to the cytoplasm. Its function is as follows. Inhibitor subunit of the major nuclear protein phosphatase-1 (PP-1). It has RNA-binding activity but does not cleave RNA and may target PP-1 to RNA-associated substrates. May also be involved in pre-mRNA splicing. Binds DNA and might act as a transcriptional repressor. Seems to be required for cell proliferation. Functionally, isoform Gamma is a site-specific single-strand endoribonuclease that cleaves single strand RNA 3' to purines and pyrimidines in A+U-rich regions. It generates 5'-phosphate termini at the site of cleavage. This isoform does not inhibit PP-1. May be implicated in mRNA splicing. This Homo sapiens (Human) protein is Nuclear inhibitor of protein phosphatase 1 (PPP1R8).